Reading from the N-terminus, the 232-residue chain is Phosphatidylserine decarboxylase proenzyme (232 aa).

The active-site Schiff-base intermediate with substrate; via pyruvic acid is the S190. Position 190 is a pyruvic acid (Ser); by autocatalysis (S190).

It belongs to the phosphatidylserine decarboxylase family. PSD-A subfamily. In terms of assembly, heterodimer of a large membrane-associated beta subunit and a small pyruvoyl-containing alpha subunit. Pyruvate is required as a cofactor. Is synthesized initially as an inactive proenzyme. Formation of the active enzyme involves a self-maturation process in which the active site pyruvoyl group is generated from an internal serine residue via an autocatalytic post-translational modification. Two non-identical subunits are generated from the proenzyme in this reaction, and the pyruvate is formed at the N-terminus of the alpha chain, which is derived from the carboxyl end of the proenzyme. The post-translation cleavage follows an unusual pathway, termed non-hydrolytic serinolysis, in which the side chain hydroxyl group of the serine supplies its oxygen atom to form the C-terminus of the beta chain, while the remainder of the serine residue undergoes an oxidative deamination to produce ammonia and the pyruvoyl prosthetic group on the alpha chain.

The protein localises to the cell membrane. The catalysed reaction is a 1,2-diacyl-sn-glycero-3-phospho-L-serine + H(+) = a 1,2-diacyl-sn-glycero-3-phosphoethanolamine + CO2. It participates in phospholipid metabolism; phosphatidylethanolamine biosynthesis; phosphatidylethanolamine from CDP-diacylglycerol: step 2/2. In terms of biological role, catalyzes the formation of phosphatidylethanolamine (PtdEtn) from phosphatidylserine (PtdSer). The protein is Phosphatidylserine decarboxylase proenzyme of Bradyrhizobium sp. (strain BTAi1 / ATCC BAA-1182).